A 94-amino-acid polypeptide reads, in one-letter code: DNA-directed RNA polymerase subunit Rpo11 (94 aa).

It belongs to the archaeal Rpo11/eukaryotic RPB11/RPC19 RNA polymerase subunit family. As to quaternary structure, part of the RNA polymerase complex.

Its subcellular location is the cytoplasm. The catalysed reaction is RNA(n) + a ribonucleoside 5'-triphosphate = RNA(n+1) + diphosphate. In terms of biological role, DNA-dependent RNA polymerase (RNAP) catalyzes the transcription of DNA into RNA using the four ribonucleoside triphosphates as substrates. In Natronomonas pharaonis (strain ATCC 35678 / DSM 2160 / CIP 103997 / JCM 8858 / NBRC 14720 / NCIMB 2260 / Gabara) (Halobacterium pharaonis), this protein is DNA-directed RNA polymerase subunit Rpo11.